Reading from the N-terminus, the 295-residue chain is CRISPR system Cmr endoribonuclease Cmr4 (295 aa).

This sequence belongs to the CRISPR system Cmr4 family. In terms of assembly, forms oligomers in isolation. Part of the type III-B Cmr ribonucleoprotein (RNP) complex, an elongated RNP with Cmr2 and Cmr3 as the base, with Cmr4 and Cmr5 forming a helical core along the mature crRNA (39 or 45 nt in length), while the complex is capped by Cmr6 and Cmr1. The 5' end of the crRNA is bound to Cmr2 and Cmr3, while Cmr6 and a Cmr1 subunit (Cmr1-1 or Cmr1-2) cap the 3' end of the crRNA. The target RNA lies anti-parallel to the crRNA, with its 5' end near Cmr1 and Cmr6 and its 3' end near Cmr2 and Cmr3; major target RNA cleavage occurs nears the junction of Cmr1/Cmr6 and Cmr4/Cmr5, with minor cleavage occurring at 6 nt intervals which coincide with the proposed spacing of Cmr4 subunits. Interacts with Cmr5. Interacts with Cmr2, Cmr3, Cmr5 and Cmr6.

Its subcellular location is the cytoplasm. In terms of biological role, CRISPR (clustered regularly interspaced short palindromic repeat), is an adaptive immune system that provides protection against mobile genetic elements (viruses, transposable elements and conjugative plasmids). CRISPR clusters contain sequences complementary to antecedent mobile elements and target invading nucleic acids. CRISPR clusters are transcribed and processed into CRISPR RNA (crRNA), formerly called psiRNA (prokaryotic silencing) in this organism. Part of the Cmr ribonucleoprotein complex which has divalent cation-dependent endoribonuclease activity specific for ssRNA complementary to the crRNA (target RNA), generating 5' hydroxy- and 3' phosphate or 2'-3' cyclic phosphate termini. This is probably the subunit that cleaves the target RNA. Cmr complex does not cleave ssDNA complementary to the crRNA. Cleavage of target RNA is guided by the crRNA; substrate cleavage occurs a fixed distance (14 nt) from the 3' end of the crRNA. In vitro reconstitution shows Cmr1-2 and Cmr5 are not absolutely necessary for target cleavage. The sequence is that of CRISPR system Cmr endoribonuclease Cmr4 from Pyrococcus furiosus (strain ATCC 43587 / DSM 3638 / JCM 8422 / Vc1).